The primary structure comprises 258 residues: Hemin import ATP-binding protein HmuV (258 aa).

An ABC transporter domain is found at 1–238; sequence MLDIDVSNLS…DILERTYRTP (238 aa). 34-41 contributes to the ATP binding site; that stretch reads GENGAGKS.

This sequence belongs to the ABC transporter superfamily. Heme (hemin) importer (TC 3.A.1.14.5) family. The complex is composed of two ATP-binding proteins (HmuV), two transmembrane proteins (HmuU) and a solute-binding protein (HmuT).

The protein resides in the cell inner membrane. In terms of biological role, part of the ABC transporter complex HmuTUV involved in hemin import. Responsible for energy coupling to the transport system. In Idiomarina loihiensis (strain ATCC BAA-735 / DSM 15497 / L2-TR), this protein is Hemin import ATP-binding protein HmuV.